The sequence spans 71 residues: Large ribosomal subunit protein uL29 (71 aa).

This sequence belongs to the universal ribosomal protein uL29 family.

The protein is Large ribosomal subunit protein uL29 of Rickettsia massiliae (strain Mtu5).